Reading from the N-terminus, the 493-residue chain is Leucine-rich repeat-containing protein 14 (493 aa).

An LRR 1; degenerate repeat occupies 111-146; it reads KHALRVLDMTGLLDDGVEQDPGTMSMWDCTAAVART. An LRR 2; degenerate repeat occupies 194-218; the sequence is RLCCRDLRAEDLPMRNTVALLQLLD. One copy of the LRR 3; degenerate repeat lies at 219–246; it reads AGCLRRVDLRFNNLGLRGLSVIIPHVAR. Residues 247–282 form an LRR 4; degenerate repeat; that stretch reads FQHLASLRLHYVHGDSRQPSVDGEDNFRYFLAQMGR. 5 LRR repeats span residues 283 to 307, 308 to 339, 340 to 360, 364 to 391, and 392 to 416; these read FTCL…LSTL, QSPL…AHLK, KLDL…QGLL, AATL…ILTQ, and CASL…LLRD.

The protein belongs to the PRAME family. LRRC14 subfamily. As to quaternary structure, interacts with IKBKB; disrupts IKBKB-IKBKG interaction preventing I-kappa-B-kinase (IKK) core complex formation and leading to a decrease of IKBKB phosphorylation and NF-kappaB activation. Interacts with CHUK.

Its subcellular location is the cytoplasm. In terms of biological role, negatively regulates Toll-like receptor-mediated NF-kappa-B signaling by disrupting IKK core complex formation through interaction with IKBKB. The sequence is that of Leucine-rich repeat-containing protein 14 from Homo sapiens (Human).